Here is an 804-residue protein sequence, read N- to C-terminus: Leucine--tRNA ligase (804 aa).

A 'HIGH' region motif is present at residues 40 to 51 (PYPSGAGLHVGH). The 'KMSKS' region signature appears at 576–580 (KMSKS). Lys579 contributes to the ATP binding site.

Belongs to the class-I aminoacyl-tRNA synthetase family.

The protein localises to the cytoplasm. The catalysed reaction is tRNA(Leu) + L-leucine + ATP = L-leucyl-tRNA(Leu) + AMP + diphosphate. This is Leucine--tRNA ligase from Bacillus licheniformis (strain ATCC 14580 / DSM 13 / JCM 2505 / CCUG 7422 / NBRC 12200 / NCIMB 9375 / NCTC 10341 / NRRL NRS-1264 / Gibson 46).